The chain runs to 922 residues: Ubiquitin carboxyl-terminal hydrolase 29 (922 aa).

The tract at residues 160-196 is disordered; sequence GILENQGGKGQNTLSSDVQTNEDILKEDNPVPNKKYK. Over residues 170–181 the composition is skewed to polar residues; sequence QNTLSSDVQTNE. The 601-residue stretch at 285–885 folds into the USP domain; sequence QGFPNLGNTC…SGYIFFYMHN (601 aa). Cysteine 294 functions as the Nucleophile in the catalytic mechanism. Histidine 840 acts as the Proton acceptor in catalysis.

This sequence belongs to the peptidase C19 family.

It is found in the cytoplasm. The protein resides in the perinuclear region. It catalyses the reaction Thiol-dependent hydrolysis of ester, thioester, amide, peptide and isopeptide bonds formed by the C-terminal Gly of ubiquitin (a 76-residue protein attached to proteins as an intracellular targeting signal).. In terms of biological role, deubiquitinase involved in innate antiviral immunity by mediating 'Lys-48'-linked deubiquitination of CGAS, thereby promoting its stabilization. The protein is Ubiquitin carboxyl-terminal hydrolase 29 of Homo sapiens (Human).